The sequence spans 136 residues: Aspartate 1-decarboxylase (136 aa).

Catalysis depends on serine 25, which acts as the Schiff-base intermediate with substrate; via pyruvic acid. A Pyruvic acid (Ser) modification is found at serine 25. Residue threonine 57 participates in substrate binding. Catalysis depends on tyrosine 58, which acts as the Proton donor. 73–75 serves as a coordination point for substrate; that stretch reads GAA.

The protein belongs to the PanD family. In terms of assembly, heterooctamer of four alpha and four beta subunits. Requires pyruvate as cofactor. In terms of processing, is synthesized initially as an inactive proenzyme, which is activated by self-cleavage at a specific serine bond to produce a beta-subunit with a hydroxyl group at its C-terminus and an alpha-subunit with a pyruvoyl group at its N-terminus.

It is found in the cytoplasm. It carries out the reaction L-aspartate + H(+) = beta-alanine + CO2. The protein operates within cofactor biosynthesis; (R)-pantothenate biosynthesis; beta-alanine from L-aspartate: step 1/1. Its function is as follows. Catalyzes the pyruvoyl-dependent decarboxylation of aspartate to produce beta-alanine. This Corynebacterium glutamicum (strain R) protein is Aspartate 1-decarboxylase.